A 1862-amino-acid polypeptide reads, in one-letter code: Protein RRP5 homolog (1862 aa).

The interval 1–56 (MANLEESFPRGGTRKLHKSEKSSQQVVEQDNLFDVSTEEGPIKRKKSQKGPAKTKK) is disordered. Position 2 is an N-acetylalanine (alanine 2). Phosphoserine is present on serine 7. Residues 43 to 56 (KRKKSQKGPAKTKK) are compositionally biased toward basic residues. S1 motif domains lie at 83–171 (GMRI…LSVN), 187–258 (GMLL…LSVE), 281–346 (GLLV…LSLR), and 365–436 (GAVL…LSLR). Serine 438 is subject to Phosphoserine. S1 motif domains are found at residues 453-522 (GTVV…MTLK), 542-611 (GLQT…LSFR), 636-707 (GQLV…LCRK), 729-798 (GMLL…LSLR), and 846-911 (GMVL…VSLH). Residues 999-1036 (SKRTRMPVQRDSETVDDKGEEKEEEEEEEEKEEENLTV) form a disordered region. Residues 1006 to 1019 (VQRDSETVDDKGEE) are compositionally biased toward basic and acidic residues. Residues 1020-1033 (KEEEEEEEEKEEEN) are compositionally biased toward acidic residues. S1 motif domains lie at 1047 to 1120 (GDKV…ISHP), 1160 to 1233 (GQTV…LSLI), 1241 to 1309 (GEVA…LSLR), and 1335 to 1407 (GQLL…LSLL). 2 disordered regions span residues 1406–1520 (LLPS…STEV) and 1545–1577 (REESSDSEDEQPHQAKKKKGKKERELEKQKAEK). 2 stretches are compositionally biased toward basic and acidic residues: residues 1423–1437 (PKQEERSGGAEEGQK) and 1445–1454 (RREEKEEPQK). Lysine 1424 is covalently cross-linked (Glycyl lysine isopeptide (Lys-Gly) (interchain with G-Cter in SUMO2)). A phosphoserine mark is found at serine 1468 and serine 1490. The segment covering 1566–1577 (KERELEKQKAEK) has biased composition (basic and acidic residues). HAT repeat units follow at residues 1590–1622 (GRQPESADDFDRLVLSSPNSSILWLQYMAFHLQ), 1696–1728 (EKYKEAGELYNRMLKRFRQEKAVWIKYGAFVLG), 1766–1798 (GDVERAKAIFENTLSTYPKRTDVWSVYIDMTIK), and 1800–1835 (GSQTAVRDIFERVIHLSLAPKRMKFFFKRYLDYEKQ).

Interacts with NF-kappa-B p50/NFKB1 and NF-kappa-B p65/RELA. As to expression, ubiquitous.

The protein resides in the nucleus. It localises to the nucleolus. Its function is as follows. Essential for the generation of mature 18S rRNA, specifically necessary for cleavages at sites A0, 1 and 2 of the 47S precursor. Directly interacts with U3 snoRNA. The polypeptide is Protein RRP5 homolog (Pdcd11) (Mus musculus (Mouse)).